Consider the following 242-residue polypeptide: Linker for activation of T-cells family member 1 (242 aa).

Over 1 to 4 (MEAD) the chain is Extracellular. A helical; Signal-anchor for type III membrane protein membrane pass occupies residues 5-28 (ALSPVGLGLLLLPFLVTLLAALCV). 2 S-palmitoyl cysteine lipidation sites follow: C27 and C30. Residues 29–242 (RCRELPVSYD…PDYENLQELN (214 aa)) lie on the Cytoplasmic side of the membrane. T40 carries the phosphothreonine modification. Phosphoserine is present on residues S41, S44, S87, S104, S109, and S112. Positions 78–118 (QPDLLPIPRSPQPLGGSHRMPSSQQNSDDANSVASYENQEP) are disordered. Residues 97–115 (MPSSQQNSDDANSVASYEN) are compositionally biased toward polar residues. Residues 136–139 (YLVV) form an interaction with PLCG1 region. Y175 carries the phosphotyrosine modification. Interaction with GRB2, GRAP2 and PIK3R1 stretches follow at residues 175 to 178 (YVNV) and 195 to 198 (YVNV). The disordered stretch occupies residues 176-242 (VNVPESEESA…PDYENLQELN (67 aa)). Phosphoserine occurs at positions 199, 212, and 215. A compositionally biased stretch (acidic residues) spans 217-234 (EVEDEGEEEGVDGEEAPD). Residue Y235 is modified to Phosphotyrosine.

When phosphorylated, interacts directly with the PIK3R1 subunit of phosphoinositide 3-kinase and the SH2 domains of GRB2, GRAP, GRAP2, PLCG1 and PLCG2. Interacts indirectly with CBL, SOS, VAV, and LCP2. Interacts with SHB and SKAP2. Interacts with FCGR1A. Interacts with CLNK. Interacts with GRB2, PLCG1 and THEMIS upon TCR activation in thymocytes. Interacts with THEMIS2. Post-translationally, phosphorylated on tyrosines by ZAP70 upon TCR activation, or by SYK upon other immunoreceptor activation; which leads to the recruitment of multiple signaling molecules. Is one of the most prominently tyrosine-phosphorylated proteins detected following TCR engagement. May be dephosphorylated by PTPRJ. Phosphorylated by ITK leading to the recruitment of VAV1 to LAT-containing complexes. In terms of processing, palmitoylation of Cys-27 and Cys-30 is required for raft targeting and efficient phosphorylation. Phosphorylated on tyrosines by ZAP70 upon TCR activation, or by SYK upon other immunoreceptor activation; which leads to the recruitment of multiple signaling molecules. Is one of the most prominently tyrosine-phosphorylated proteins detected following TCR engagement. May be dephosphorylated by PTPRJ. Phosphorylated by ITK leading to the recruitment of VAV1 to LAT-containing complexes. Post-translationally, 'Lys-63'-linked ubiquitinated by TRAF6. As to expression, expressed in T-cells and mast cells.

The protein localises to the cell membrane. In terms of biological role, required for TCR (T-cell antigen receptor)- and pre-TCR-mediated signaling, both in mature T-cells and during their development. Involved in FCGR3 (low affinity immunoglobulin gamma Fc region receptor III)-mediated signaling in natural killer cells and FCER1 (high affinity immunoglobulin epsilon receptor)-mediated signaling in mast cells. Couples activation of these receptors and their associated kinases with distal intracellular events such as mobilization of intracellular calcium stores, PKC activation, MAPK activation or cytoskeletal reorganization through the recruitment of PLCG1, GRB2, GRAP2, and other signaling molecules. In Mus musculus (Mouse), this protein is Linker for activation of T-cells family member 1 (Lat).